The sequence spans 161 residues: Peripheral myelin protein 22 (161 aa).

A topological domain (cytoplasmic) is located at residue M1. A helical transmembrane segment spans residues 2-31 (LLLLLGILFLHIAVLVLLFVSTIVSQWLVG). Over 32–64 (NGHTTDLWQNCTTSALGAVQHCYSSSVSEWLQS) the chain is Extracellular. Residue N41 is glycosylated (N-linked (GlcNAc...) asparagine). A helical transmembrane segment spans residues 65–91 (VQATMILSVIFSVLALFLFFCQLFTLT). Topologically, residues 92–95 (KGGR) are cytoplasmic. A helical transmembrane segment spans residues 96 to 119 (FYITGFFQILAGLCVMSAAAIYTV). The Extracellular portion of the chain corresponds to 120–133 (RHSEWHVNTDYSYG). A helical membrane pass occupies residues 134–156 (FAYILAWVAFPLALLSGIIYVIL). The Cytoplasmic portion of the chain corresponds to 157–160 (RKRE).

Belongs to the PMP-22/EMP/MP20 family. Post-translationally, ubiquitinated by the DCX(DCAF13) E3 ubiquitin ligase complex, leading to its degradation. In terms of tissue distribution, schwann cells of the peripheral nervous system. Expressed at growth arrest of mammalian fibroblasts.

It is found in the cell membrane. In terms of biological role, might be involved in growth regulation, and in myelinization in the peripheral nervous system. In Mus musculus (Mouse), this protein is Peripheral myelin protein 22 (Pmp22).